The following is a 529-amino-acid chain: MPFRRSSLNHRHRDGHVLVWNQRNLHESLEQQPQRCFATRYFVTFMLFLGMANAYVMRTNMSVAIVAMVNHTAIKSGEAEEYDDECGDRDIPIDDSQDGEFAWSSALQGYILSSFFYGYVITQIPFGILAKKYGSLRFLGYGMLINSVFAFLVPVAARGGGVWGLCAVRFIQGLGEGPIVPCTHAMLAKWIPPNERSRMGAAVYAGAQFGTIISMPLSGLLAEYGFDGGWPSIFYVFGIVGTVWSIAFLIFVHEDPSSHPTIDEREKKYINDSLWGTDVVKSPPIPFKAIIKSLPFYAILFAHMGHNYGYETLMTELPTYMKQVLRFSLKSNGLLSSLPYLAMWLFSMFISVVADWMISSKRFSHTATRKLINSIGQYGPGVALIAASYTGCDRALTLAILTIGVGLNGGIYSGFKINHLDLTPRFAGFLMSITNCSANLAGLLAPIAAGHLISDPSKPMMGQWQIVFFIAAFVYIICGTFYNIFGSGERQYWDNPEDDEQKPALQTTVTTSPARLSNGSTAPAAISSS.

Helical transmembrane passes span 37–57, 110–130, 148–168, 202–222, 232–252, 338–358, 429–449, and 466–486; these read FATR…AYVM, YILS…GILA, VFAF…LCAV, AVYA…GLLA, SIFY…LIFV, LPYL…DWMI, FLMS…PIAA, and IVFF…NIFG. Residues 495 to 529 are disordered; it reads NPEDDEQKPALQTTVTTSPARLSNGSTAPAAISSS. Polar residues predominate over residues 504-529; that stretch reads ALQTTVTTSPARLSNGSTAPAAISSS.

Belongs to the major facilitator superfamily. Sodium/anion cotransporter family.

The protein resides in the membrane. Functionally, may be an inorganic phosphate cotransporter. In Drosophila melanogaster (Fruit fly), this protein is Putative inorganic phosphate cotransporter (Picot).